Reading from the N-terminus, the 274-residue chain is 4-diphosphocytidyl-2-C-methyl-D-erythritol kinase (274 aa).

The active site involves K8. 92–102 (PSGAGLGGGSS) provides a ligand contact to ATP. Residue D134 is part of the active site.

It belongs to the GHMP kinase family. IspE subfamily.

The catalysed reaction is 4-CDP-2-C-methyl-D-erythritol + ATP = 4-CDP-2-C-methyl-D-erythritol 2-phosphate + ADP + H(+). The protein operates within isoprenoid biosynthesis; isopentenyl diphosphate biosynthesis via DXP pathway; isopentenyl diphosphate from 1-deoxy-D-xylulose 5-phosphate: step 3/6. Its function is as follows. Catalyzes the phosphorylation of the position 2 hydroxy group of 4-diphosphocytidyl-2C-methyl-D-erythritol. The protein is 4-diphosphocytidyl-2-C-methyl-D-erythritol kinase of Porphyromonas gingivalis (strain ATCC 33277 / DSM 20709 / CIP 103683 / JCM 12257 / NCTC 11834 / 2561).